The sequence spans 174 residues: MNPRRKSRLSVVLFIFLGISVASALVLYALRQNIDLFYTPTEVVNGKNNESHTKPSIGQRIRIGGMVVEGTVERDPKSLKVRFDLNDIGPSVTVIYEGILPDLFREGQGIVAQGVLIEPTVLNATEVLAKHDENYVPPELEAQMQKIHKPMGISDLKNESDRDRQEKQFKEGNQ.

Residues 1 to 8 (MNPRRKSR) are Cytoplasmic-facing. The helical; Signal-anchor for type II membrane protein transmembrane segment at 9–29 (LSVVLFIFLGISVASALVLYA) threads the bilayer. Residues 30 to 174 (LRQNIDLFYT…QEKQFKEGNQ (145 aa)) lie on the Periplasmic side of the membrane. H131 and Y135 together coordinate heme. Residues 149-174 (KPMGISDLKNESDRDRQEKQFKEGNQ) form a disordered region. The span at 156 to 174 (LKNESDRDRQEKQFKEGNQ) shows a compositional bias: basic and acidic residues.

The protein belongs to the CcmE/CycJ family.

The protein localises to the cell inner membrane. In terms of biological role, heme chaperone required for the biogenesis of c-type cytochromes. Transiently binds heme delivered by CcmC and transfers the heme to apo-cytochromes in a process facilitated by CcmF and CcmH. This is Cytochrome c-type biogenesis protein CcmE from Histophilus somni (strain 129Pt) (Haemophilus somnus).